Reading from the N-terminus, the 708-residue chain is Outer capsid protein mu-1 (708 aa).

A lipid anchor (N-myristoyl glycine; by host) is attached at G2. N-linked (GlcNAc...) asparagine; by host glycans are attached at residues N3, N12, N81, N110, N458, N482, N528, and N659. The interval 675 to 708 is disordered; it reads PKPDCPTSGDSGESSNRRVKRDSYAGVVKRGYTR.

It belongs to the orthoreovirus mu-1 protein family. As to quaternary structure, heterohexamer of three sigma-3 and three Mu-1 proteins. Cleaved during the endosomal proteolytic disassembly of the outer capsid. Mu-1 is proteolytically cleaved into mu-1N and mu-1C during the maturation step to generate the ISVP. Cleavage of mu-1 to mu-1C is dependent on myristoylation and binding to sigma-3 protein. Mu-1C is further cleaved into delta (59 kDa), and phi (13 kDa) segments during entry into the host cell cytoplasm. In terms of processing, mu-1 and mu-1N are N-terminally myristoylated. This acylation is essential for the membrane fusion activity.

The protein localises to the virion. It is found in the host cell membrane. The protein resides in the host endoplasmic reticulum. Its subcellular location is the host mitochondrion. In terms of biological role, major outer capsid protein involved in host cell membrane penetration. In the endocytic compartment, outer-capsid protein sigma-3 is removed by cathepsin proteases, which exposes the viral membrane-penetration protein mu-1. Both myristoylated peptides mu-1N and phi are released during infectious subvirion particles (ISVP) formation in the endosome. They associate with host membranes and mu-1N induces permeabilization and delivery of transcriptionally active viral particles into the host cell cytoplasm. Seems to induce apoptosis in the host cell. Its function is as follows. The viral outer shell polypeptides, of which mu-1 is one, impose structural constraints that prevent elongation of nascent transcripts by the RNA-dependent RNA polymerase lambda-3. This Mammalia (T3D) protein is Outer capsid protein mu-1 (M2).